The sequence spans 171 residues: uncharacterized protein (171 aa).

Belongs to the IUNH family.

This is an uncharacterized protein from Acidianus ambivalens (Desulfurolobus ambivalens).